A 342-amino-acid polypeptide reads, in one-letter code: Anthranilate phosphoribosyltransferase (342 aa).

Residues Gly79, 82–83 (GD), Thr87, 89–92 (NVST), 107–115 (KHGNRSVSS), and Ser119 each bind 5-phospho-alpha-D-ribose 1-diphosphate. Gly79 lines the anthranilate pocket. Ser91 serves as a coordination point for Mg(2+). Position 110 (Asn110) interacts with anthranilate. Arg165 provides a ligand contact to anthranilate. Asp223 and Glu224 together coordinate Mg(2+).

It belongs to the anthranilate phosphoribosyltransferase family. Homodimer. It depends on Mg(2+) as a cofactor.

The catalysed reaction is N-(5-phospho-beta-D-ribosyl)anthranilate + diphosphate = 5-phospho-alpha-D-ribose 1-diphosphate + anthranilate. The protein operates within amino-acid biosynthesis; L-tryptophan biosynthesis; L-tryptophan from chorismate: step 2/5. Catalyzes the transfer of the phosphoribosyl group of 5-phosphorylribose-1-pyrophosphate (PRPP) to anthranilate to yield N-(5'-phosphoribosyl)-anthranilate (PRA). The chain is Anthranilate phosphoribosyltransferase from Aeromonas hydrophila subsp. hydrophila (strain ATCC 7966 / DSM 30187 / BCRC 13018 / CCUG 14551 / JCM 1027 / KCTC 2358 / NCIMB 9240 / NCTC 8049).